Reading from the N-terminus, the 210-residue chain is uncharacterized protein (210 aa).

This is an uncharacterized protein from Sulfolobus islandicus filamentous virus (isolate Iceland/Hveragerdi) (SIFV).